We begin with the raw amino-acid sequence, 196 residues long: Early light-induced protein, chloroplastic (196 aa).

A chloroplast-targeting transit peptide spans 1 to 48; the sequence is MAVSSCQSIMSNSMTNISSRSRVNQFTNIPSVYIPTLRRNVSLKVRSM. Positions 47–57 are enriched in basic and acidic residues; that stretch reads SMAEGEPKEQS. The segment at 47-81 is disordered; the sequence is SMAEGEPKEQSKVAVDPTTPTASTPTPQPAYTRPP. A run of 3 helical transmembrane segments spans residues 105–125, 132–152, and 176–196; these read LAMI…QGLS, GVAW…IPFF, and IAML…TSLV.

Belongs to the ELIP/psbS family.

The protein localises to the plastid. It localises to the chloroplast membrane. In terms of biological role, probably involved in the integration of pigments into the mature pigment-protein complexes. The sequence is that of Early light-induced protein, chloroplastic from Pisum sativum (Garden pea).